We begin with the raw amino-acid sequence, 816 residues long: Lon protease (816 aa).

One can recognise a Lon N-terminal domain in the interval 27 to 221; it reads LPLLPIRDVV…KVNDLLAREH (195 aa). ATP is bound at residue 372–379; it reads GPPGVGKT. The Lon proteolytic domain occupies 608–789; that stretch reads KNEVGVVNGL…DEVLKLALEK (182 aa). Residues Ser695 and Lys738 contribute to the active site. Residues 795–816 form a disordered region; sequence PKGKAKPATPKVVVRPSKEISA. Residues 800-809 are compositionally biased toward low complexity; sequence KPATPKVVVR.

Belongs to the peptidase S16 family. In terms of assembly, homohexamer. Organized in a ring with a central cavity.

It localises to the cytoplasm. It carries out the reaction Hydrolysis of proteins in presence of ATP.. Functionally, ATP-dependent serine protease that mediates the selective degradation of mutant and abnormal proteins as well as certain short-lived regulatory proteins. Required for cellular homeostasis and for survival from DNA damage and developmental changes induced by stress. Degrades polypeptides processively to yield small peptide fragments that are 5 to 10 amino acids long. Binds to DNA in a double-stranded, site-specific manner. In Trichlorobacter lovleyi (strain ATCC BAA-1151 / DSM 17278 / SZ) (Geobacter lovleyi), this protein is Lon protease.